We begin with the raw amino-acid sequence, 327 residues long: Tartrate-resistant acid phosphatase type 5 (327 aa).

The first 22 residues, Met1–Thr22, serve as a signal peptide directing secretion. The Fe cation site is built by Asp35, Asp73, Tyr76, and Asn112. N-linked (GlcNAc...) asparagine glycans are attached at residues Asn118 and Asn149. A disulfide bridge connects residues Cys163 and Cys221. His207, His242, and His244 together coordinate Fe cation.

As to quaternary structure, exists either as monomer or, after proteolytic processing, as a dimer of two chains linked by disulfide bond(s). Fe cation is required as a cofactor. In terms of tissue distribution, characteristic constituent of osteoclasts and some mononuclear preosteoclasts. Preferentially expressed in skeletal tissues.

Its subcellular location is the lysosome. It carries out the reaction a phosphate monoester + H2O = an alcohol + phosphate. May play a role in the process of bone resorption. The osteoclastic trap acts on nucleotide tri- and diphosphates with higher affinity, compared with other substrates. This Rattus norvegicus (Rat) protein is Tartrate-resistant acid phosphatase type 5 (Acp5).